A 428-amino-acid polypeptide reads, in one-letter code: Enolase (428 aa).

Residue glutamine 163 coordinates (2R)-2-phosphoglycerate. Glutamate 205 serves as the catalytic Proton donor. 3 residues coordinate Mg(2+): aspartate 242, glutamate 283, and aspartate 310. 4 residues coordinate (2R)-2-phosphoglycerate: lysine 335, arginine 364, serine 365, and lysine 386. The Proton acceptor role is filled by lysine 335.

It belongs to the enolase family. Mg(2+) is required as a cofactor.

Its subcellular location is the cytoplasm. The protein localises to the secreted. It localises to the cell surface. It catalyses the reaction (2R)-2-phosphoglycerate = phosphoenolpyruvate + H2O. It functions in the pathway carbohydrate degradation; glycolysis; pyruvate from D-glyceraldehyde 3-phosphate: step 4/5. Catalyzes the reversible conversion of 2-phosphoglycerate (2-PG) into phosphoenolpyruvate (PEP). It is essential for the degradation of carbohydrates via glycolysis. The sequence is that of Enolase from Saccharopolyspora erythraea (strain ATCC 11635 / DSM 40517 / JCM 4748 / NBRC 13426 / NCIMB 8594 / NRRL 2338).